Here is a 446-residue protein sequence, read N- to C-terminus: 3-phosphoshikimate 1-carboxyvinyltransferase (446 aa).

3-phosphoshikimate is bound by residues Lys35, Ser36, and Arg40. Position 35 (Lys35) interacts with phosphoenolpyruvate. Phosphoenolpyruvate-binding residues include Gly108 and Arg137. 4 residues coordinate 3-phosphoshikimate: Ser182, Gln184, Asp332, and Lys359. Gln184 lines the phosphoenolpyruvate pocket. Residue Asp332 is the Proton acceptor of the active site. 2 residues coordinate phosphoenolpyruvate: Arg363 and Arg405.

Belongs to the EPSP synthase family. As to quaternary structure, monomer.

The protein localises to the cytoplasm. It carries out the reaction 3-phosphoshikimate + phosphoenolpyruvate = 5-O-(1-carboxyvinyl)-3-phosphoshikimate + phosphate. The protein operates within metabolic intermediate biosynthesis; chorismate biosynthesis; chorismate from D-erythrose 4-phosphate and phosphoenolpyruvate: step 6/7. In terms of biological role, catalyzes the transfer of the enolpyruvyl moiety of phosphoenolpyruvate (PEP) to the 5-hydroxyl of shikimate-3-phosphate (S3P) to produce enolpyruvyl shikimate-3-phosphate and inorganic phosphate. The chain is 3-phosphoshikimate 1-carboxyvinyltransferase from Acaryochloris marina (strain MBIC 11017).